Reading from the N-terminus, the 240-residue chain is 1-(5-phosphoribosyl)-5-[(5-phosphoribosylamino)methylideneamino] imidazole-4-carboxamide isomerase 1 (240 aa).

Asp8 serves as the catalytic Proton acceptor. Catalysis depends on Asp129, which acts as the Proton donor.

It belongs to the HisA/HisF family.

Its subcellular location is the cytoplasm. It carries out the reaction 1-(5-phospho-beta-D-ribosyl)-5-[(5-phospho-beta-D-ribosylamino)methylideneamino]imidazole-4-carboxamide = 5-[(5-phospho-1-deoxy-D-ribulos-1-ylimino)methylamino]-1-(5-phospho-beta-D-ribosyl)imidazole-4-carboxamide. The protein operates within amino-acid biosynthesis; L-histidine biosynthesis; L-histidine from 5-phospho-alpha-D-ribose 1-diphosphate: step 4/9. In Ruegeria pomeroyi (strain ATCC 700808 / DSM 15171 / DSS-3) (Silicibacter pomeroyi), this protein is 1-(5-phosphoribosyl)-5-[(5-phosphoribosylamino)methylideneamino] imidazole-4-carboxamide isomerase 1.